A 203-amino-acid polypeptide reads, in one-letter code: Probable flagellin 1 (203 aa).

The propeptide occupies 1 to 11 (MGMRFLKNEKG).

It belongs to the archaeal flagellin family.

The protein resides in the archaeal flagellum. In terms of biological role, flagellin is the subunit protein which polymerizes to form the filaments of archaeal flagella. In Archaeoglobus fulgidus (strain ATCC 49558 / DSM 4304 / JCM 9628 / NBRC 100126 / VC-16), this protein is Probable flagellin 1 (flaB1).